Reading from the N-terminus, the 34-residue chain is MEPTQTINLIALSLIVVVHAGVLALRLGISLGRN.

Residues 9 to 29 form a helical membrane-spanning segment; it reads LIALSLIVVVHAGVLALRLGI.

Belongs to the PsaM family.

The protein localises to the cellular thylakoid membrane. The chain is Photosystem I reaction center subunit XII from Prochlorococcus marinus (strain MIT 9312).